We begin with the raw amino-acid sequence, 215 residues long: Thymidylate kinase (215 aa).

7–14 (GMEGSGKS) is an ATP binding site.

Belongs to the thymidylate kinase family.

It carries out the reaction dTMP + ATP = dTDP + ADP. Functionally, phosphorylation of dTMP to form dTDP in both de novo and salvage pathways of dTTP synthesis. The protein is Thymidylate kinase of Nitratidesulfovibrio vulgaris (strain DSM 19637 / Miyazaki F) (Desulfovibrio vulgaris).